Consider the following 293-residue polypeptide: 4-hydroxy-tetrahydrodipicolinate synthase (293 aa).

Pyruvate is bound at residue Thr-47. The active-site Proton donor/acceptor is Tyr-136. Residue Lys-164 is the Schiff-base intermediate with substrate of the active site. Ile-206 serves as a coordination point for pyruvate.

It belongs to the DapA family. As to quaternary structure, homotetramer; dimer of dimers.

It localises to the cytoplasm. The enzyme catalyses L-aspartate 4-semialdehyde + pyruvate = (2S,4S)-4-hydroxy-2,3,4,5-tetrahydrodipicolinate + H2O + H(+). Its pathway is amino-acid biosynthesis; L-lysine biosynthesis via DAP pathway; (S)-tetrahydrodipicolinate from L-aspartate: step 3/4. Functionally, catalyzes the condensation of (S)-aspartate-beta-semialdehyde [(S)-ASA] and pyruvate to 4-hydroxy-tetrahydrodipicolinate (HTPA). The protein is 4-hydroxy-tetrahydrodipicolinate synthase of Listeria monocytogenes serotype 4a (strain HCC23).